We begin with the raw amino-acid sequence, 175 residues long: MDTELVEMLKQTGAVKFGDFTLSSGRKSTYYVDKYIFETNPVCLSVIGDRIAKLIPAGTRRLAGIEIGSIPLAAVASVKSGMPFVVVRKATKGYGTNKLIEGVWQKGEKVFVVEDVVTTARGALGAIHTLREAGLAVDEMVCVVDREEGGRESLEQEGVKVRSLVKSSELLGYKP.

5-phospho-alpha-D-ribose 1-diphosphate-binding positions include R88, K89, K92, and E114–G122. Orotate-binding residues include T118 and R146.

The protein belongs to the purine/pyrimidine phosphoribosyltransferase family. PyrE subfamily. In terms of assembly, homodimer. Mg(2+) is required as a cofactor.

It catalyses the reaction orotidine 5'-phosphate + diphosphate = orotate + 5-phospho-alpha-D-ribose 1-diphosphate. It participates in pyrimidine metabolism; UMP biosynthesis via de novo pathway; UMP from orotate: step 1/2. Its function is as follows. Catalyzes the transfer of a ribosyl phosphate group from 5-phosphoribose 1-diphosphate to orotate, leading to the formation of orotidine monophosphate (OMP). This Methanocella arvoryzae (strain DSM 22066 / NBRC 105507 / MRE50) protein is Orotate phosphoribosyltransferase.